Reading from the N-terminus, the 802-residue chain is Mitogen-activated protein kinase kinase kinase 20 (802 aa).

Serine 2 carries the N-acetylserine modification. Phosphoserine is present on residues serine 2, serine 3, and serine 7. Residues 16–277 (LQFFENCGGG…NLPDQCNSFL (262 aa)) form the Protein kinase domain. Residues 22–30 (CGGGSFGSV) and lysine 45 contribute to the ATP site. The active-site Proton acceptor is the aspartate 133. Threonine 161 is modified (phosphothreonine; by autocatalysis). Serine 165 is modified (phosphoserine; by autocatalysis). Phosphoserine is present on residues serine 275 and serine 302. A leucine-zipper region spans residues 287-308 (IEATLERLKKLERDLSFKEQEL). Positions 339–410 (WTEDDVYFWV…KSAIEKLTHD (72 aa)) constitute an SAM domain. 3 positions are modified to phosphoserine: lysine 434, glutamine 453, and serine 567. Residue threonine 586 is modified to Phosphothreonine. A phosphoserine mark is found at serine 587, serine 593, and serine 599. Over residues 624-642 (YQQITPSINPSRSSSPTQY) the composition is skewed to polar residues. A disordered region spans residues 624–802 (YQQITPSINP…RGNYRGRRNF (179 aa)). Threonine 628 is modified (phosphothreonine). Phosphoserine is present on residues serine 634, serine 638, serine 649, serine 650, and serine 661. A compositionally biased stretch (low complexity) spans 643-666 (GLSRNFSSLNLSSRDSGFSSLNDS). Positions 667-678 (SSERGRYSDRSR) are enriched in basic and acidic residues. The interval 670–713 (RGRYSDRSRNKYYRGSVSLNSSPKGRYGGKSQHSTPSRERYSGK) is sensing domain (S). Residues serine 685, serine 720, serine 727, and serine 733 each carry the phosphoserine modification. Residues 728–741 (PDFKRSPNDHDRRV) are compositionally biased toward basic and acidic residues. Threonine 744 is subject to Phosphothreonine. The tract at residues 776–802 (RKKTHRQLSAKTSKERTRGNYRGRRNF) is C-terminal domain (CTD).

It belongs to the protein kinase superfamily. STE Ser/Thr protein kinase family. MAP kinase kinase kinase subfamily. In terms of assembly, homodimer. Interacts with ZNF33A. Component of a signaling complex containing at least AKAP13, PKN1, MAPK14, MAP3K20 and MAP2K3. Within this complex, AKAP13 interacts directly with PKN1, which in turn recruits MAPK14, MAP2K3 and MAP3K20. Interacts with EIF2AK4/GCN2; promoting EIF2AK4/GCN2 kinase activity. Interacts with isoform ZAKbeta. As to quaternary structure, interacts with isoform ZAKalpha. The cofactor is Mg(2+). In terms of processing, activated by phosphorylation by PKN1, followed by autophosphorylation on Thr-161 and Ser-165. Autophosphorylation in response to ribotoxic stress promotes dissociation from colliding ribosomes and activation.

Its subcellular location is the cytoplasm. The protein localises to the nucleus. The enzyme catalyses L-seryl-[protein] + ATP = O-phospho-L-seryl-[protein] + ADP + H(+). The catalysed reaction is L-threonyl-[protein] + ATP = O-phospho-L-threonyl-[protein] + ADP + H(+). Activated in response to stress, such as ribosomal stress, osmotic shock and ionizing radiation. Activated by phosphorylation by PKN1, followed by autophosphorylation on Thr-161 and Ser-165. In terms of biological role, stress-activated component of a protein kinase signal transduction cascade that promotes programmed cell death in response to various stress, such as ribosomal stress, osmotic shock and ionizing radiation. Acts by catalyzing phosphorylation of MAP kinase kinases, leading to activation of the JNK (MAPK8/JNK1, MAPK9/JNK2 and/or MAPK10/JNK3) and MAP kinase p38 (MAPK11, MAPK12, MAPK13 and/or MAPK14) pathways. Activates JNK through phosphorylation of MAP2K4/MKK4 and MAP2K7/MKK7, and MAP kinase p38 gamma (MAPK12) via phosphorylation of MAP2K3/MKK3 and MAP2K6/MKK6. Involved in stress associated with adrenergic stimulation: contributes to cardiac decompensation during periods of acute cardiac stress. May be involved in regulation of S and G2 cell cycle checkpoint by mediating phosphorylation of CHEK2. Its function is as follows. Key component of the stress-activated protein kinase signaling cascade in response to ribotoxic stress or UV-B irradiation. Acts as the proximal sensor of ribosome collisions during the ribotoxic stress response (RSR). Directly binds to the ribosome by inserting its flexible C-terminus into the ribosomal intersubunit space, thereby acting as a sentinel for colliding ribosomes. Upon ribosome collisions, activates either the stress-activated protein kinase signal transduction cascade or the integrated stress response (ISR), leading to programmed cell death or cell survival, respectively. Dangerous levels of ribosome collisions trigger the autophosphorylation and activation of MAP3K20, which dissociates from colliding ribosomes and phosphorylates MAP kinase kinases, leading to activation of the JNK and MAP kinase p38 pathways that promote programmed cell death. Less dangerous levels of ribosome collisions trigger the integrated stress response (ISR): MAP3K20 activates EIF2AK4/GCN2 independently of its protein-kinase activity, promoting EIF2AK4/GCN2-mediated phosphorylation of EIF2S1/eIF-2-alpha. Also acts as a histone kinase by phosphorylating histone H3 at 'Ser-28' (H3S28ph). Isoform that lacks the C-terminal region that mediates ribosome-binding: does not act as a sensor of ribosome collisions in response to ribotoxic stress. May act as an antagonist of isoform ZAKalpha: interacts with isoform ZAKalpha, leading to decrease the expression of isoform ZAKalpha. The sequence is that of Mitogen-activated protein kinase kinase kinase 20 from Mus musculus (Mouse).